Reading from the N-terminus, the 272-residue chain is Dickkopf-related protein 1 (272 aa).

The first 31 residues, 1–31 (MMVVCAAAAVRFLAVFTMMALCSLPLLGASA), serve as a signal peptide directing secretion. S62 carries an O-linked (GalNAc...) serine glycan. 10 disulfide bridges follow: C86–C98, C92–C114, C117–C131, C124–C136, C130–C141, C195–C207, C201–C216, C206–C243, C226–C251, and C245–C269. The segment at 86–141 (CAEDEECGSDEYCSSPSRGAAGVGGVQICLACRKRRKRCMRHAMCCPGNYCKNGIC) is DKK-type Cys-1. The DKK-type Cys-2 stretch occupies residues 195 to 269 (CLRSSDCAAG…ASNSSRLHTC (75 aa)). N-linked (GlcNAc...) asparagine glycosylation is present at N262.

This sequence belongs to the dickkopf family. As to quaternary structure, interacts (via the C-terminal Cys-rich domain) with LRP5 (via beta-propeller regions 3 and 4); the interaction, enhanced by MESD and or KREMEN, antagonizes Wnt-mediated signaling. Interacts with LRP6. Forms a ternary complex with LRP6 and KREM1. Interacts with KREM1.

It is found in the secreted. Its function is as follows. Antagonizes canonical Wnt signaling by inhibiting LRP5/6 interaction with Wnt and by forming a ternary complex with the transmembrane protein KREMEN that promotes internalization of LRP5/6. Inhibits the pro-apoptotic function of KREMEN1 in a Wnt-independent manner, and has anti-apoptotic activity. Plays a role in limb development; attenuates Wnt signaling in the developing limb to allow normal limb patterning. This Mus musculus (Mouse) protein is Dickkopf-related protein 1 (Dkk1).